The chain runs to 211 residues: MTKVLFITANPNSAEGSFGMAVGEAFIEAYKNEHPQDEVVTIDLFNTTVPAIDADVFAAWGKFAAGEGFEALTEVQQQKVAAMNTNLETFMNADRYVFVTPMWNFSYPPVVKAYLDNVAIAGKTFKYTENGPVGLLEGKKALHIQATGGVYSEGAYAAVDFGRNHLKTVLGFVGVNDTEYIAVEGMNANPEKAQEIKEAAIANARELAKRF.

102–105 provides a ligand contact to FMN; that stretch reads MWNF.

The protein belongs to the azoreductase type 1 family. As to quaternary structure, homodimer. FMN is required as a cofactor.

The catalysed reaction is 2 a quinone + NADH + H(+) = 2 a 1,4-benzosemiquinone + NAD(+). It carries out the reaction N,N-dimethyl-1,4-phenylenediamine + anthranilate + 2 NAD(+) = 2-(4-dimethylaminophenyl)diazenylbenzoate + 2 NADH + 2 H(+). Functionally, quinone reductase that provides resistance to thiol-specific stress caused by electrophilic quinones. Its function is as follows. Also exhibits azoreductase activity. Catalyzes the reductive cleavage of the azo bond in aromatic azo compounds to the corresponding amines. The polypeptide is FMN-dependent NADH:quinone oxidoreductase 2 (Bacillus cereus (strain ATCC 14579 / DSM 31 / CCUG 7414 / JCM 2152 / NBRC 15305 / NCIMB 9373 / NCTC 2599 / NRRL B-3711)).